Here is a 385-residue protein sequence, read N- to C-terminus: Lipid-A-disaccharide synthase (385 aa).

The protein belongs to the LpxB family.

The enzyme catalyses 2-N,3-O-bis[(3R)-3-hydroxytetradecanoyl]-alpha-D-glucosaminyl 1-phosphate + UDP-2-N,3-O-bis[(3R)-3-hydroxytetradecanoyl]-alpha-D-glucosamine = lipid A disaccharide (E. coli) + UDP + H(+). It carries out the reaction a lipid X + a UDP-2-N,3-O-bis[(3R)-3-hydroxyacyl]-alpha-D-glucosamine = a lipid A disaccharide + UDP + H(+). The protein operates within glycolipid biosynthesis; lipid IV(A) biosynthesis; lipid IV(A) from (3R)-3-hydroxytetradecanoyl-[acyl-carrier-protein] and UDP-N-acetyl-alpha-D-glucosamine: step 5/6. Functionally, condensation of UDP-2,3-diacylglucosamine and 2,3-diacylglucosamine-1-phosphate to form lipid A disaccharide, a precursor of lipid A, a phosphorylated glycolipid that anchors the lipopolysaccharide to the outer membrane of the cell. The sequence is that of Lipid-A-disaccharide synthase from Wigglesworthia glossinidia brevipalpis.